The sequence spans 187 residues: Pumilio homolog 26 (187 aa).

The stretch at 20–42 (VATEFLRVSNDVAELHKLSSKLT) is one Pumilio 1; degenerate repeat. The stretch at 43 to 78 (SDPYLFVEFVKTIRGFLSVQTALGLSGEIDTVFLQV) is one Pumilio 2; degenerate repeat. The stretch at 79–116 (IKGWFPDLITETFSFLIVVRIINLFNKRANSKVYPDIL) is one Pumilio 3; degenerate repeat. A Pumilio 4; degenerate repeat occupies 117-154 (RRIGNNALYLTRNPLRGICLVEKAINVRDPDCTVFIAL). The Pumilio 5 repeat unit spans residues 155–187 (KLHSHYVELSFEELGSNIVEKLLSVGESGICGV).

It localises to the cytoplasm. Its function is as follows. Sequence-specific RNA-binding protein that regulates translation and mRNA stability by binding the 3'-UTR of target mRNAs. This Arabidopsis thaliana (Mouse-ear cress) protein is Pumilio homolog 26 (APUM26).